The following is a 322-amino-acid chain: Methionyl-tRNA formyltransferase (322 aa).

112–115 (SLLP) provides a ligand contact to (6S)-5,6,7,8-tetrahydrofolate.

It belongs to the Fmt family.

It carries out the reaction L-methionyl-tRNA(fMet) + (6R)-10-formyltetrahydrofolate = N-formyl-L-methionyl-tRNA(fMet) + (6S)-5,6,7,8-tetrahydrofolate + H(+). Its function is as follows. Attaches a formyl group to the free amino group of methionyl-tRNA(fMet). The formyl group appears to play a dual role in the initiator identity of N-formylmethionyl-tRNA by promoting its recognition by IF2 and preventing the misappropriation of this tRNA by the elongation apparatus. This is Methionyl-tRNA formyltransferase from Synechococcus sp. (strain JA-3-3Ab) (Cyanobacteria bacterium Yellowstone A-Prime).